A 190-amino-acid polypeptide reads, in one-letter code: Elongation factor P-like protein (190 aa).

The protein belongs to the elongation factor P family.

The protein is Elongation factor P-like protein of Klebsiella pneumoniae (strain 342).